Consider the following 215-residue polypeptide: Large ribosomal subunit protein uL3 (215 aa).

A disordered region spans residues 136 to 155; it reads GVSISHRSHGSTGQRQDPGK. N5-methylglutamine is present on glutamine 151.

Belongs to the universal ribosomal protein uL3 family. In terms of assembly, part of the 50S ribosomal subunit. Forms a cluster with proteins L14 and L19. Methylated by PrmB.

Its function is as follows. One of the primary rRNA binding proteins, it binds directly near the 3'-end of the 23S rRNA, where it nucleates assembly of the 50S subunit. The polypeptide is Large ribosomal subunit protein uL3 (Rickettsia africae (strain ESF-5)).